The sequence spans 921 residues: Isoleucine--tRNA ligase (921 aa).

The 'HIGH' region motif lies at 57–67 (PYANGDIHMGH). An L-isoleucyl-5'-AMP-binding site is contributed by Glu552. Residues 593 to 597 (KMSKS) carry the 'KMSKS' region motif. Lys596 is a binding site for ATP. Zn(2+) is bound by residues Cys888, Cys891, Cys908, and Cys911.

This sequence belongs to the class-I aminoacyl-tRNA synthetase family. IleS type 1 subfamily. As to quaternary structure, monomer. Zn(2+) is required as a cofactor.

The protein localises to the cytoplasm. The catalysed reaction is tRNA(Ile) + L-isoleucine + ATP = L-isoleucyl-tRNA(Ile) + AMP + diphosphate. Functionally, catalyzes the attachment of isoleucine to tRNA(Ile). As IleRS can inadvertently accommodate and process structurally similar amino acids such as valine, to avoid such errors it has two additional distinct tRNA(Ile)-dependent editing activities. One activity is designated as 'pretransfer' editing and involves the hydrolysis of activated Val-AMP. The other activity is designated 'posttransfer' editing and involves deacylation of mischarged Val-tRNA(Ile). The polypeptide is Isoleucine--tRNA ligase (Bacillus cereus (strain G9842)).